Consider the following 1154-residue polypeptide: FERM domain-containing protein A (1154 aa).

5 disordered regions span residues 122–149, 432–468, 715–734, 771–794, and 961–980; these read NNNS…SSSS, NLSS…NHHN, NKNN…SSSS, SNSN…TSSS, and TNGS…NNGI. FERM domains lie at 218 to 547 and 666 to 1103; these read PLHQ…PSIQ and REIV…QTKL. Positions 437–447 are enriched in gly residues; sequence GGSGNGSGSGN. Low complexity predominate over residues 448–463; that stretch reads GSSSSSSNSSSGNNNN.

Key regulator of adhesion dynamics, it acts as an anti-adhesive. Plays a critical role in the regulation of cell-cell adhesion, multi-cellular development and, in particular, the formation of the organising center known as the tip. Required for turnover of paxillin-adhesion sites during cell migration. Plays a major role in normal cell shape, cell-substrate adhesion and actin cytoskeleton organization. This is FERM domain-containing protein A (frmA) from Dictyostelium discoideum (Social amoeba).